The chain runs to 56 residues: Large ribosomal subunit protein bL32 (56 aa).

Residues 1 to 16 are compositionally biased toward basic residues; the sequence is MAVQKSKKSRSMRGMR. Positions 1–33 are disordered; it reads MAVQKSKKSRSMRGMRRSHDALTTSAVSVDATS. The span at 21–33 shows a compositional bias: polar residues; that stretch reads ALTTSAVSVDATS.

This sequence belongs to the bacterial ribosomal protein bL32 family.

The chain is Large ribosomal subunit protein bL32 from Aliivibrio fischeri (strain ATCC 700601 / ES114) (Vibrio fischeri).